Reading from the N-terminus, the 149-residue chain is Large ribosomal subunit protein bL9 (149 aa).

It belongs to the bacterial ribosomal protein bL9 family.

Binds to the 23S rRNA. This Anaeromyxobacter dehalogenans (strain 2CP-C) protein is Large ribosomal subunit protein bL9.